We begin with the raw amino-acid sequence, 109 residues long: Cell division protein ZapA (109 aa).

A coiled-coil region spans residues 21 to 97 (PEQRDALSQA…QTIEQALLDQ (77 aa)).

Belongs to the ZapA family. Type 1 subfamily. Homodimer. Interacts with FtsZ.

The protein resides in the cytoplasm. In terms of biological role, activator of cell division through the inhibition of FtsZ GTPase activity, therefore promoting FtsZ assembly into bundles of protofilaments necessary for the formation of the division Z ring. It is recruited early at mid-cell but it is not essential for cell division. The polypeptide is Cell division protein ZapA (Enterobacter sp. (strain 638)).